The following is a 20-amino-acid chain: Isocitrate dehydrogenase [NADP] (20 aa).

This sequence belongs to the isocitrate and isopropylmalate dehydrogenases family. The cofactor is Mn(2+). Mg(2+) serves as cofactor.

It is found in the cytoplasm. It carries out the reaction D-threo-isocitrate + NADP(+) = 2-oxoglutarate + CO2 + NADPH. This is Isocitrate dehydrogenase [NADP] from Naegleria fowleri (Brain eating amoeba).